Here is a 222-residue protein sequence, read N- to C-terminus: uncharacterized protein (222 aa).

This sequence belongs to the PhoU family.

It localises to the cytoplasm. In terms of biological role, not known; probably involved in phosphate transport and/or metabolism. This is an uncharacterized protein from Deinococcus radiodurans (strain ATCC 13939 / DSM 20539 / JCM 16871 / CCUG 27074 / LMG 4051 / NBRC 15346 / NCIMB 9279 / VKM B-1422 / R1).